The chain runs to 238 residues: tRNA (guanine-N(7)-)-methyltransferase (238 aa).

Residues Glu71, Glu96, Asp123, and Asp146 each coordinate S-adenosyl-L-methionine. The active site involves Asp146. Substrate contacts are provided by residues Lys150, Asp182, and 217-220 (TKFE).

This sequence belongs to the class I-like SAM-binding methyltransferase superfamily. TrmB family.

It carries out the reaction guanosine(46) in tRNA + S-adenosyl-L-methionine = N(7)-methylguanosine(46) in tRNA + S-adenosyl-L-homocysteine. It functions in the pathway tRNA modification; N(7)-methylguanine-tRNA biosynthesis. In terms of biological role, catalyzes the formation of N(7)-methylguanine at position 46 (m7G46) in tRNA. The protein is tRNA (guanine-N(7)-)-methyltransferase of Methylobacillus flagellatus (strain ATCC 51484 / DSM 6875 / VKM B-1610 / KT).